Here is a 95-residue protein sequence, read N- to C-terminus: UPF0381 protein HI_0400 (95 aa).

This sequence belongs to the UPF0381 family.

The protein is UPF0381 protein HI_0400 of Haemophilus influenzae (strain ATCC 51907 / DSM 11121 / KW20 / Rd).